Here is a 234-residue protein sequence, read N- to C-terminus: Peroxisomal coenzyme A diphosphatase ndx-8 (234 aa).

Residues 27–162 (EQDAGVLILL…TFLIDEFYMV (136 aa)) form the Nudix hydrolase domain. Positions 66 to 90 (GGMMDDEDGQNVRRTAIREAYEEVG) match the Nudix box motif. Residues E84 and E88 each coordinate Mg(2+). The chain crosses the membrane as a helical span at residues 170-190 (YPTTYGVTALMCIVVAIGLLG). Residues 232 to 234 (SKI) carry the Microbody targeting signal motif.

This sequence belongs to the Nudix hydrolase family. It depends on Mg(2+) as a cofactor. Mn(2+) is required as a cofactor.

It localises to the peroxisome membrane. In terms of biological role, coenzyme A diphosphatase which mediates the cleavage of CoA into 3',5'-ADP and 4'-phosphopantetheine. In Caenorhabditis elegans, this protein is Peroxisomal coenzyme A diphosphatase ndx-8 (ndx-8).